The primary structure comprises 193 residues: 3-isopropylmalate dehydratase small subunit (193 aa).

Belongs to the LeuD family. LeuD type 1 subfamily. Heterodimer of LeuC and LeuD.

It catalyses the reaction (2R,3S)-3-isopropylmalate = (2S)-2-isopropylmalate. It functions in the pathway amino-acid biosynthesis; L-leucine biosynthesis; L-leucine from 3-methyl-2-oxobutanoate: step 2/4. Catalyzes the isomerization between 2-isopropylmalate and 3-isopropylmalate, via the formation of 2-isopropylmaleate. In Bacillus cereus (strain ZK / E33L), this protein is 3-isopropylmalate dehydratase small subunit.